Here is a 271-residue protein sequence, read N- to C-terminus: Undecaprenyl-diphosphatase (271 aa).

The next 8 membrane-spanning stretches (helical) occupy residues 2-22 (LLIL…FVPV), 42-62 (ANLF…VVYW), 80-100 (LRFW…GFSL), 108-128 (LFNP…MIIV), 149-168 (SIFV…SRSA), 175-195 (WIAG…AIPV), 214-234 (IEFI…LVVI), and 248-268 (IFAI…IFKI).

It belongs to the UppP family.

Its subcellular location is the cell membrane. It carries out the reaction di-trans,octa-cis-undecaprenyl diphosphate + H2O = di-trans,octa-cis-undecaprenyl phosphate + phosphate + H(+). In terms of biological role, catalyzes the dephosphorylation of undecaprenyl diphosphate (UPP). Confers resistance to bacitracin. This chain is Undecaprenyl-diphosphatase, found in Clostridium tetani (strain Massachusetts / E88).